The primary structure comprises 179 residues: Insulin-like growth factor 2 (179 aa).

The first 24 residues, 1–24 (MGITAGKSMLALLAFLAFASCCYA), serve as a signal peptide directing secretion. The tract at residues 25 to 52 (AYRPSETLCGGELVDTLQFVCGDRGFYF) is b. Disulfide bonds link Cys33–Cys71, Cys45–Cys84, and Cys70–Cys75. Residues 53–64 (SRPSSRINRRSR) form a c region. Residues 65 to 85 (GIVEECCFRSCDLALLETYCA) are a. A d region spans residues 86 to 91 (APAKSE). Positions 92–179 (RDVSASTTVL…GGASSEASSD (88 aa)) are cleaved as a propeptide — e peptide. Residue Thr106 is glycosylated (O-linked (GalNAc...) threonine). O-linked (GalNAc...) serine glycosylation is present at Ser154. A disordered region spans residues 160–179 (ALPTQDPATHGGASSEASSD). A glycan (O-linked (GalNAc...) threonine) is linked at Thr163.

This sequence belongs to the insulin family. Interacts with MYORG; this interaction is required for IGF2 secretion. Interacts with integrins ITGAV:ITGB3 and ITGA6:ITGB4; integrin-binding is required for IGF2 signaling. Interacts with IGFBP2. Proteolytically processed by PCSK4, proIGF2 is cleaved at Arg-128 and Arg-92 to generate big-IGF2 and mature IGF2.

The protein localises to the secreted. In terms of biological role, the insulin-like growth factors possess growth-promoting activity. Major fetal growth hormone in mammals. Plays a key role in regulating fetoplacental development. IGF2 is influenced by placental lactogen. Also involved in tissue differentiation. In adults, involved in glucose metabolism in adipose tissue, skeletal muscle and liver. Acts as a ligand for integrin which is required for IGF2 signaling. Positively regulates myogenic transcription factor MYOD1 function by facilitating the recruitment of transcriptional coactivators, thereby controlling muscle terminal differentiation. Inhibits myoblast differentiation and modulates metabolism via increasing the mitochondrial respiration rate. Its function is as follows. Preptin undergoes glucose-mediated co-secretion with insulin, and acts as a physiological amplifier of glucose-mediated insulin secretion. Exhibits osteogenic properties by increasing osteoblast mitogenic activity through phosphoactivation of MAPK1 and MAPK3. In Ovis aries (Sheep), this protein is Insulin-like growth factor 2.